A 180-amino-acid polypeptide reads, in one-letter code: Nucleoside triphosphate/diphosphate phosphatase (180 aa).

Arginine 26 serves as the catalytic Proton donor. Residues asparagine 90, aspartate 106, aspartate 108, aspartate 110, aspartate 123, and glutamate 126 each coordinate Mg(2+).

The protein belongs to the Ntdp family. Requires Mg(2+) as cofactor.

It catalyses the reaction a ribonucleoside 5'-triphosphate + H2O = a ribonucleoside 5'-diphosphate + phosphate + H(+). The catalysed reaction is a ribonucleoside 5'-diphosphate + H2O = a ribonucleoside 5'-phosphate + phosphate + H(+). Functionally, has nucleoside phosphatase activity towards nucleoside triphosphates and nucleoside diphosphates. The protein is Nucleoside triphosphate/diphosphate phosphatase of Staphylococcus saprophyticus subsp. saprophyticus (strain ATCC 15305 / DSM 20229 / NCIMB 8711 / NCTC 7292 / S-41).